The sequence spans 380 residues: Cytochrome b (380 aa).

A run of 4 helical transmembrane segments spans residues 33-53 (FGSL…FLAM), 77-98 (WLIR…YMHI), 113-133 (WNIG…GYVL), and 178-198 (FFAF…LHLL). Heme b-binding residues include His-83 and His-97. Heme b contacts are provided by His-182 and His-196. Residue His-201 participates in a ubiquinone binding. A run of 4 helical transmembrane segments spans residues 226–246 (YKDL…ALFA), 288–308 (LGGV…PILH), 320–340 (LTQF…WIGG), and 347–367 (FIII…VLSP).

Belongs to the cytochrome b family. As to quaternary structure, the cytochrome bc1 complex contains 3 respiratory subunits (MT-CYB, CYC1 and UQCRFS1), 2 core proteins (UQCRC1 and UQCRC2) and probably 6 low-molecular weight proteins. Requires heme b as cofactor.

Its subcellular location is the mitochondrion inner membrane. In terms of biological role, component of the ubiquinol-cytochrome c reductase complex (complex III or cytochrome b-c1 complex) that is part of the mitochondrial respiratory chain. The b-c1 complex mediates electron transfer from ubiquinol to cytochrome c. Contributes to the generation of a proton gradient across the mitochondrial membrane that is then used for ATP synthesis. This chain is Cytochrome b (mt-cyb), found in Oncorhynchus keta (Chum salmon).